The primary structure comprises 154 residues: MSEKYVVTWDMFQMHTRKLSERLLPATQWKGIIAVSRGGLFPAAVIARELGIRHIETVCISSYDHNQQGNLNVLHAAQVKNGGEGFIVVDDLVDTGNTARAIRELYPNARFVTVFAKPAGANLVDDYVIDIPQNTWIEQPWDMGITFVPPLARK.

Residues 37–38 (RG) and 90–98 (DDLVDTGNT) each bind 5-phospho-alpha-D-ribose 1-diphosphate. Asp91 serves as a coordination point for Mg(2+). 2 residues coordinate guanine: Asp94 and Ile137. Positions 94 and 137 each coordinate xanthine. GMP is bound by residues 94-98 (DTGNT) and 136-137 (WI).

The protein belongs to the purine/pyrimidine phosphoribosyltransferase family. XGPT subfamily. In terms of assembly, homotetramer. Mg(2+) is required as a cofactor.

The protein resides in the cell inner membrane. It carries out the reaction GMP + diphosphate = guanine + 5-phospho-alpha-D-ribose 1-diphosphate. The catalysed reaction is XMP + diphosphate = xanthine + 5-phospho-alpha-D-ribose 1-diphosphate. The enzyme catalyses IMP + diphosphate = hypoxanthine + 5-phospho-alpha-D-ribose 1-diphosphate. The protein operates within purine metabolism; GMP biosynthesis via salvage pathway; GMP from guanine: step 1/1. It participates in purine metabolism; XMP biosynthesis via salvage pathway; XMP from xanthine: step 1/1. Functionally, purine salvage pathway enzyme that catalyzes the transfer of the ribosyl-5-phosphate group from 5-phospho-alpha-D-ribose 1-diphosphate (PRPP) to the N9 position of the 6-oxopurines guanine and xanthine to form the corresponding ribonucleotides GMP (guanosine 5'-monophosphate) and XMP (xanthosine 5'-monophosphate), with the release of PPi. To a lesser extent, also acts on hypoxanthine. The sequence is that of Xanthine-guanine phosphoribosyltransferase from Histophilus somni (strain 129Pt) (Haemophilus somnus).